Here is a 425-residue protein sequence, read N- to C-terminus: MDERIPCKNPQCSHFILPATAARTEGYCMPCVQARYRQVQEEYIRKNRKTIDAFSGITNPVEMLKLVHEPREHDPLIEWIPCPIPTDELYKKLSDDESRDMVDYAEELFDSGWQEEAQEIALCLAAFTQANLDNFLRQVINEEELELSSPLPFHRAPPDVRDALLQKVETDDENRDGILCALAWIGDEVVVEHFNRWRQEPPAWSASLHILPHRYAHQAGWELTENGRRRDLYFTQCTHLVKQAPEQPAVFRAVAEYGENCPHCSLPLINLFEVAPSAVGLSTQGWPGQIRILTCQCCTAYNTVFATVDPQGQPRWYEKNALSTLAVENSADWITLPLDVLHPGESRLPLFAAEIFLPTTFSQLGGHPAWVQDTDYPTCPTCAQTMMFLAQLSYEDIEEEEYAEGMLYGFICPSCQTTATSYQQT.

This is an uncharacterized protein from Salmonella typhimurium (strain LT2 / SGSC1412 / ATCC 700720).